A 342-amino-acid chain; its full sequence is Methionyl-tRNA formyltransferase (342 aa).

Ser-110 to Pro-113 lines the (6S)-5,6,7,8-tetrahydrofolate pocket.

It belongs to the Fmt family.

The enzyme catalyses L-methionyl-tRNA(fMet) + (6R)-10-formyltetrahydrofolate = N-formyl-L-methionyl-tRNA(fMet) + (6S)-5,6,7,8-tetrahydrofolate + H(+). Functionally, attaches a formyl group to the free amino group of methionyl-tRNA(fMet). The formyl group appears to play a dual role in the initiator identity of N-formylmethionyl-tRNA by promoting its recognition by IF2 and preventing the misappropriation of this tRNA by the elongation apparatus. In Synechococcus sp. (strain CC9311), this protein is Methionyl-tRNA formyltransferase.